The chain runs to 302 residues: Succinate--CoA ligase [ADP-forming] subunit alpha (302 aa).

CoA-binding positions include 17 to 20 (TGST), K43, and 96 to 98 (ITE). Substrate is bound at residue Y159. H247 serves as the catalytic Tele-phosphohistidine intermediate.

It belongs to the succinate/malate CoA ligase alpha subunit family. In terms of assembly, heterotetramer of two alpha and two beta subunits.

It carries out the reaction succinate + ATP + CoA = succinyl-CoA + ADP + phosphate. The enzyme catalyses GTP + succinate + CoA = succinyl-CoA + GDP + phosphate. It participates in carbohydrate metabolism; tricarboxylic acid cycle; succinate from succinyl-CoA (ligase route): step 1/1. In terms of biological role, succinyl-CoA synthetase functions in the citric acid cycle (TCA), coupling the hydrolysis of succinyl-CoA to the synthesis of either ATP or GTP and thus represents the only step of substrate-level phosphorylation in the TCA. The alpha subunit of the enzyme binds the substrates coenzyme A and phosphate, while succinate binding and nucleotide specificity is provided by the beta subunit. In Staphylococcus aureus (strain MSSA476), this protein is Succinate--CoA ligase [ADP-forming] subunit alpha.